The primary structure comprises 377 residues: Anhydro-N-acetylmuramic acid kinase (377 aa).

12 to 19 (GTSLDGID) is an ATP binding site.

Belongs to the anhydro-N-acetylmuramic acid kinase family.

The catalysed reaction is 1,6-anhydro-N-acetyl-beta-muramate + ATP + H2O = N-acetyl-D-muramate 6-phosphate + ADP + H(+). Its pathway is amino-sugar metabolism; 1,6-anhydro-N-acetylmuramate degradation. It functions in the pathway cell wall biogenesis; peptidoglycan recycling. Catalyzes the specific phosphorylation of 1,6-anhydro-N-acetylmuramic acid (anhMurNAc) with the simultaneous cleavage of the 1,6-anhydro ring, generating MurNAc-6-P. Is required for the utilization of anhMurNAc either imported from the medium or derived from its own cell wall murein, and thus plays a role in cell wall recycling. In Methylorubrum extorquens (strain CM4 / NCIMB 13688) (Methylobacterium extorquens), this protein is Anhydro-N-acetylmuramic acid kinase.